The chain runs to 305 residues: MLWFKNVMIYRLNRPIELSVEQIEQQLSAFAFTPCGSQDMAKSGWVPPMGAKSDALTHSIPGHVLLCLRKEEKILPSSVVKQELEGKISKLENDQSRKLRKTDKDALKDELLHQLMPRAFSRFGQTLLWLDLANDLVLVDAGSARKAEDCLAMLRKSIGSLPVVPLTMEKPIEMTLTEWVRSGEPAAGFAIQDEAELKVLLEEGGILRCKKQDLSSDEIAVHIEAGKLVTKLALDWRERVQFLLGDDGTVKRLKFSDTLREQNDDIDREDFAARFDADFLLMTGELTGLIAELIAGLGGEAPRQG.

The protein belongs to the RdgC family.

It localises to the cytoplasm. The protein localises to the nucleoid. In terms of biological role, may be involved in recombination. The protein is Recombination-associated protein RdgC of Sodalis glossinidius (strain morsitans).